We begin with the raw amino-acid sequence, 147 residues long: Fibromodulin (147 aa).

LRR repeat units lie at residues 1–15 (LDHN…PLPR), 16–37 (SLRE…ALEG), 40–61 (NLTA…MRGL), 63–84 (SLIL…LPSA), 85–105 (LEQL…YFRG), and 108–128 (KLLY…ASNT). The N-linked (GlcNAc...) (keratan sulfate) asparagine glycan is linked to N5. The N-linked (GlcNAc...) (keratan sulfate) asparagine glycan is linked to N40. N-linked (GlcNAc...) (keratan sulfate) asparagine glycosylation is present at N130. An LRR 7 repeat occupies 133–147 (SLLELDLSYNQLQKI).

It belongs to the small leucine-rich proteoglycan (SLRP) family. SLRP class II subfamily. As to quaternary structure, binds to type I and type II collagen. In terms of processing, binds keratan sulfate chains.

It localises to the secreted. The protein resides in the extracellular space. It is found in the extracellular matrix. Its function is as follows. Affects the rate of fibrils formation. May have a primary role in collagen fibrillogenesis. The polypeptide is Fibromodulin (FMOD) (Sus scrofa (Pig)).